Here is an 878-residue protein sequence, read N- to C-terminus: Splicing factor 3B subunit 2 (878 aa).

Residues 1-10 (MAAEHPEPPK) are compositionally biased toward basic and acidic residues. Disordered regions lie at residues 1–25 (MAAE…GHYG) and 67–136 (RPVL…LRVG). Residue K10 forms a Glycyl lysine isopeptide (Lys-Gly) (interchain with G-Cter in SUMO2) linkage. The SAP domain maps to 24–58 (YGAWAAQELQARLAEIGAPIQGSREELVERLQTYT). 2 stretches are compositionally biased toward pro residues: residues 91 to 114 (PMPP…PPPG) and 122 to 133 (AHPPNLGPPPPL). Positions 140–177 (ALSEEERLKLAQQQAALLMQQEERAKQAAVLMEQERQQ) form a coiled coil. Disordered stretches follow at residues 183–356 (GTAV…EYVT) and 383–436 (KKEK…SKKK). A compositionally biased stretch (low complexity) spans 201 to 221 (PLGPRVAAPVGPVVPTPTVLP). Omega-N-methylarginine is present on residues R205, R228, and R230. The span at 224 to 237 (APVPRPRGPPPPPG) shows a compositional bias: pro residues. K258 is modified (N6-acetyllysine). Positions 260-269 (LQLKESRQEE) are enriched in basic and acidic residues. K263 participates in a covalent cross-link: Glycyl lysine isopeptide (Lys-Gly) (interchain with G-Cter in SUMO2). The residue at position 272 (S272) is a Phosphoserine. Phosphothreonine is present on T281. Residues S290 and S292 each carry the phosphoserine modification. T294 is modified (phosphothreonine). S300 is subject to Phosphoserine. Positions 305–321 (EKNRKRRNRKKKKKPQR) are enriched in basic residues. Positions 330 to 342 (SGDREKDSGRSRG) are enriched in basic and acidic residues. Position 343 is a phosphoserine (S343). Glycyl lysine isopeptide (Lys-Gly) (interchain with G-Cter in SUMO2) cross-links involve residues K383 and K395. 2 stretches are compositionally biased toward basic and acidic residues: residues 383-397 (KKEK…DKME) and 405-414 (KGFEEEHKDS). Positions 384–533 (KEKEKEPEKL…QEKEEQKTMK (150 aa)) are required for interaction with PRMT9. 3 positions are modified to phosphoserine: S414, S418, and S419. K475 participates in a covalent cross-link: Glycyl lysine isopeptide (Lys-Gly) (interchain with G-Cter in SUMO2). 2 positions are modified to omega-N-methylarginine: R491 and R498. The residue at position 491 (R491) is a Symmetric dimethylarginine. A Glycyl lysine isopeptide (Lys-Gly) (interchain with G-Cter in SUMO2) cross-link involves residue K526. Residues 674–740 (AAEFQTKTEE…PGGFSSVPAG (67 aa)) are disordered. Positions 695 to 715 (EPSDEESSEEEEEEESDEDKP) are enriched in acidic residues. A Glycyl lysine isopeptide (Lys-Gly) (interchain with G-Cter in SUMO2) cross-link involves residue K753. A Phosphothreonine modification is found at T763. Residues K773, K826, and K840 each participate in a glycyl lysine isopeptide (Lys-Gly) (interchain with G-Cter in SUMO2) cross-link. Residues 827 to 852 (YEEHVREQQAQVEKEDFSDMVAEHAA) are compositionally biased toward basic and acidic residues. Residues 827 to 878 (YEEHVREQQAQVEKEDFSDMVAEHAAKQKQKKRKAQPQDSRGGSKKYKEFKF) are disordered. Position 844 is a phosphoserine (S844).

Component of the 17S U2 SnRNP complex, a ribonucleoprotein complex that contains small nuclear RNA (snRNA) U2 and a number of specific proteins. Part of the SF3B subcomplex of the 17S U2 SnRNP complex. SF3B associates with the splicing subcomplex SF3A and a 12S RNA unit to form the U2 small nuclear ribonucleoproteins complex (U2 snRNP). Within the SF3B complex, interacts directly with SF3B4. Found in a complex with PRMT9, SF3B2 and SF3B4. Interacts (Arg-491-methylated form) with SMN1 (via Tudor domain). Interacts with RBM7. Interacts with ERCC6. Component of the minor spliceosome. Within this complex, interacts with SCNM1 and CRIPT. In terms of processing, methylation at Arg-491 by PRMT9 is required for the interaction with SMN1.

The protein resides in the nucleus. It localises to the nucleus speckle. Component of the 17S U2 SnRNP complex of the spliceosome, a large ribonucleoprotein complex that removes introns from transcribed pre-mRNAs. The 17S U2 SnRNP complex (1) directly participates in early spliceosome assembly and (2) mediates recognition of the intron branch site during pre-mRNA splicing by promoting the selection of the pre-mRNA branch-site adenosine, the nucleophile for the first step of splicing. Within the 17S U2 SnRNP complex, SF3B2 is part of the SF3B subcomplex, which is required for 'A' complex assembly formed by the stable binding of U2 snRNP to the branchpoint sequence in pre-mRNA. Sequence independent binding of SF3A and SF3B subcomplexes upstream of the branch site is essential, it may anchor U2 snRNP to the pre-mRNA. May also be involved in the assembly of the 'E' complex. Also acts as a component of the minor spliceosome, which is involved in the splicing of U12-type introns in pre-mRNAs. The protein is Splicing factor 3B subunit 2 of Mus musculus (Mouse).